The chain runs to 363 residues: Aminomethyltransferase (363 aa).

Belongs to the GcvT family. The glycine cleavage system is composed of four proteins: P, T, L and H.

It carries out the reaction N(6)-[(R)-S(8)-aminomethyldihydrolipoyl]-L-lysyl-[protein] + (6S)-5,6,7,8-tetrahydrofolate = N(6)-[(R)-dihydrolipoyl]-L-lysyl-[protein] + (6R)-5,10-methylene-5,6,7,8-tetrahydrofolate + NH4(+). The glycine cleavage system catalyzes the degradation of glycine. This chain is Aminomethyltransferase, found in Prosthecochloris aestuarii (strain DSM 271 / SK 413).